Reading from the N-terminus, the 285-residue chain is MPRYAQLVMGPAGSGKSTYCSTMVQHCGSLNRSVQVVNLDPAAEHFDYPVLADIRELIEVDDVMEDRSLRFGPNGGLVYCMEYFANNFDWLESCLGHTEDDYILFDCPGQIELYTHLPVMKYLVEQLQQWEFRVCGVFLVDSQFMVESFKFLSGVLAALSAMVSLEIPQCNIMTKMDLLGKKAKKEIEKFLDPDMYSMIEDTSNRFKSNKFKKLTEALCGLIDDYSMVRFLPFDRSDEECMNIVLQHIDFAIQYGEDLEFKEPKENEEDKSENFDEFFQDRADEP.

A GTP-binding site is contributed by 13–18; that stretch reads GSGKST. Residues 72–74 carry the Gly-Pro-Asn (GPN)-loop; involved in dimer interface motif; that stretch reads GPN. 174–177 contributes to the GTP binding site; that stretch reads TKMD. Residues 261–285 form a disordered region; the sequence is KEPKENEEDKSENFDEFFQDRADEP. The segment covering 265-277 has biased composition (acidic residues); that stretch reads ENEEDKSENFDEF.

This sequence belongs to the GPN-loop GTPase family. As to quaternary structure, heterodimer with gpn1. Binds to RNA polymerase II (RNAPII).

Its function is as follows. Small GTPase required for proper localization of RNA polymerase II (RNAPII). May act at an RNAP assembly step prior to nuclear import. In Xenopus tropicalis (Western clawed frog), this protein is GPN-loop GTPase 3.